Reading from the N-terminus, the 345-residue chain is Ubiquitin-associated domain-containing protein 2 (345 aa).

The first 35 residues, 1–35 (MFTSTGSSGLYKAPLSKSLLLVPSALSLLLALLLP), serve as a signal peptide directing secretion. At 36-91 (HCQKLFVYDLHAVKNDFQIWRLICGRIICLDLKDTFCSSLLIYNFRIFERRYGSRK) the chain is on the extracellular side. A helical transmembrane segment spans residues 92-112 (FASFLLGSWVLSALFDFLLVE). The Cytoplasmic portion of the chain corresponds to 113–125 (AMQYFFGITAASN). A helical membrane pass occupies residues 126–146 (LPSGFLAPVFALFVPFYCSIP). Residues 147–163 (RVQVAQILGPLSITNKT) are Extracellular-facing. N-linked (GlcNAc...) asparagine glycosylation occurs at N161. The helical transmembrane segment at 164 to 184 (LIYILGLQLFTSGSYIWIVAI) threads the bilayer. Residues 185–345 (SGLMSGLCYN…NVATNFLLQH (161 aa)) lie on the Cytoplasmic side of the membrane. The region spanning 305 to 345 (EVSEEQVARLMEMGFSRGDALEALRASNNDLNVATNFLLQH) is the UBA domain.

In terms of assembly, interacts with LMBR1L, FAF2, AMFR and VCP.

The protein localises to the endoplasmic reticulum membrane. Its function is as follows. Restricts trafficking of FAF2 from the endoplasmic reticulum to lipid droplets. In association with LMBR1L and E3 ubiquitin-protein ligase AMFR, negatively regulates the canonical Wnt signaling pathway in the lymphocytes by promoting the ubiquitin-mediated degradation of CTNNB1 and Wnt receptors FZD6 and LRP6. This chain is Ubiquitin-associated domain-containing protein 2 (UBAC2), found in Macaca fascicularis (Crab-eating macaque).